Reading from the N-terminus, the 180-residue chain is LDLR chaperone boca (180 aa).

Residues 1–18 (MQTRLVLLLLALTPLVLA) form the signal peptide. A compositionally biased stretch (acidic residues) spans 48–61 (QWEEDEEPLEDDEL). A disordered region spans residues 48–78 (QWEEDEEPLEDDELPEHLRPQPKLDLSNLDS). A structured core region spans residues 93 to 166 (TLMTFVSVTG…QERCKGVTIE (74 aa)). The Prevents secretion from ER signature appears at 177-180 (KDEL).

The protein belongs to the MESD family. Monomer. Interacts with Arrow and Yolkless.

It is found in the endoplasmic reticulum. Its function is as follows. Chaperone specifically assisting the folding of beta-propeller/EGF modules within the family of low-density lipoprotein receptors (LDLRs). Acts as a modulator of the Wg pathway, since some LDLRs are coreceptors for the canonical Wnt pathway. The polypeptide is LDLR chaperone boca (boca) (Drosophila melanogaster (Fruit fly)).